The primary structure comprises 830 residues: uncharacterized protein (830 aa).

Disordered regions lie at residues 1 to 28, 70 to 147, and 186 to 210; these read MGVQ…DSIC, RRAN…GNFA, and AASP…SKSL. The segment covering 10–27 has biased composition (polar residues); the sequence is NSKNWLRQPDQQPIQDSI. Low complexity-rich tracts occupy residues 100–130 and 186–199; these read QKSS…SIQS and AASP…ASTS. A compositionally biased stretch (polar residues) spans 200-210; sequence ENLTPTSSKSL. 10 helical membrane passes run 505-525, 529-549, 551-571, 584-604, 622-642, 659-679, 691-711, 715-735, 740-760, and 802-822; these read WLVA…VYGG, DMLI…YINP, FFLF…FLGR, FCFA…YVVF, MLYA…GSAL, IIAV…LSLL, IQMF…LHFG, ISSA…SHFI, FAVV…AQGG, and IAIG…PFFG.

This sequence belongs to the ThrE exporter (TC 2.A.79) family.

It is found in the cell membrane. It localises to the cell tip. This is an uncharacterized protein from Schizosaccharomyces pombe (strain 972 / ATCC 24843) (Fission yeast).